Reading from the N-terminus, the 633-residue chain is CDK5 and ABL1 enzyme substrate 1 (633 aa).

Low complexity predominate over residues 1-29 (MAAAAAAATTAACSSGSAGTDAAGASGLQ). The interval 1 to 99 (MAAAAAAATT…EGGAAKPGAG (99 aa)) is disordered. The interval 1–109 (MAAAAAAATT…GACGARTRFS (109 aa)) is interaction with TDRD7. A compositionally biased stretch (basic and acidic residues) spans 51–61 (PPRKPRMDPRR). Residues Ser168 and Ser287 each carry the phosphoserine modification. The tract at residues 179–492 (QWQPPRPAPL…TTVIDYVKPS (314 aa)) is interaction with CDK3. Ser313 carries the post-translational modification Phosphoserine; by CDK2 and CDK3. Residue Thr415 is modified to Phosphothreonine.

It belongs to the cyclin family. In terms of assembly, found in a complex with p53/TP53. Found in a number of complexes with CDK2, CDK3, CDK5, ABL1, TDRD7, CDK17, CCNA1, CCNE1 and TP73. Interacts with CDK2, CDK3, CDK5, ABL1 and TDRD7. Post-translationally, phosphorylated on Ser-313 by CCNE1/CDK3. Phosphorylated on serine/threonine residues by CDK5 and on tyrosine residues by ABL1. Also phosphorylated in vitro by CCNA1/CDK2, CCNE1/CDK2, CCNA1/CDK3 and CCNE1/CDK3. Expressed in breast, pancreas, colon, head and neck (at protein level). Strongly decreased in more than half of cases of atypical endometrial hyperplasia and in more than 90% of endometrial cancers.

It localises to the nucleus. Its subcellular location is the cytoplasm. In terms of biological role, cyclin-dependent kinase binding protein. Enhances cyclin-dependent kinase tyrosine phosphorylation by nonreceptor tyrosine kinases, such as that of CDK5 by activated ABL1, which leads to increased CDK5 activity and is critical for neuronal development, and that of CDK2 by WEE1, which leads to decreased CDK2 activity and growth inhibition. Positively affects neuronal outgrowth. Plays a role as a regulator for p53/p73-induced cell death. The polypeptide is CDK5 and ABL1 enzyme substrate 1 (CABLES1) (Homo sapiens (Human)).